A 509-amino-acid polypeptide reads, in one-letter code: Putative 6-phosphofructo-2-kinase/fructose-2,6-bisphosphatase YLR345W (509 aa).

Residue S6 is modified to Phosphoserine. The segment at S6–K291 is 6-phosphofructo-2-kinase. An ATP-binding site is contributed by G90–L98. The Proton donor/acceptor role is filled by D173. N212–L217 is an ATP binding site. A beta-D-fructose 6-phosphate-binding site is contributed by R237. The tract at residues G292 to L466 is fructose-2,6-bisphosphatase. Residue R298 coordinates beta-D-fructose 2,6-bisphosphate. Residue Y415–S418 coordinates ATP. Beta-D-fructose 2,6-bisphosphate contacts are provided by Y433 and R464. Position 460–464 (E460–R464) interacts with ATP.

This sequence in the C-terminal section; belongs to the phosphoglycerate mutase family. In terms of assembly, homodimer.

The protein resides in the cytoplasm. The catalysed reaction is beta-D-fructose 2,6-bisphosphate + H2O = beta-D-fructose 6-phosphate + phosphate. It carries out the reaction beta-D-fructose 6-phosphate + ATP = beta-D-fructose 2,6-bisphosphate + ADP + H(+). Its function is as follows. Synthesis and degradation of fructose 2,6-bisphosphate. The chain is Putative 6-phosphofructo-2-kinase/fructose-2,6-bisphosphatase YLR345W from Saccharomyces cerevisiae (strain ATCC 204508 / S288c) (Baker's yeast).